A 284-amino-acid chain; its full sequence is RNA polymerase sigma factor RpoH (284 aa).

The sigma-70 factor domain-2 stretch occupies residues 53–122; the sequence is LILSHLRFVI…IHEYVLRNWR (70 aa). The Interaction with polymerase core subunit RpoC signature appears at 77–80; the sequence is DLIQ. The sigma-70 factor domain-4 stretch occupies residues 228–280; it reads ALLRLDERSRHIIHARWLDKNKKNTLQNIANNYGISAERVRQLEKNAMKKLKL. Residues 253–272 constitute a DNA-binding region (H-T-H motif); it reads LQNIANNYGISAERVRQLEK.

This sequence belongs to the sigma-70 factor family. RpoH subfamily. In terms of assembly, interacts with the RNA polymerase core enzyme.

It localises to the cytoplasm. Sigma factors are initiation factors that promote the attachment of RNA polymerase to specific initiation sites and are then released. This sigma factor is involved in regulation of expression of heat shock genes. The protein is RNA polymerase sigma factor RpoH of Buchnera aphidicola subsp. Acyrthosiphon pisum (strain APS) (Acyrthosiphon pisum symbiotic bacterium).